A 294-amino-acid polypeptide reads, in one-letter code: Secreted frizzled-related protein 2 (294 aa).

The signal sequence occupies residues 1–24; that stretch reads MPRGPGSLLLLVLASHCCLGSARG. Positions 34–154 constitute an FZ domain; that stretch reads YKRSNCKPIP…PQDNDLCIPL (121 aa). 8 disulfides stabilise this stretch: cysteine 39–cysteine 102, cysteine 49–cysteine 95, cysteine 86–cysteine 124, cysteine 113–cysteine 151, cysteine 117–cysteine 141, cysteine 171–cysteine 244, cysteine 174–cysteine 246, and cysteine 189–cysteine 294. An NTR domain is found at 171 to 294; it reads CEACKNKNED…ISRSIRKLQC (124 aa).

Belongs to the secreted frizzled-related protein (sFRP) family.

The protein resides in the secreted. Functionally, soluble frizzled-related proteins (sFRPS) function as modulators of Wnt signaling through direct interaction with Wnts. They have a role in regulating cell growth and differentiation in specific cell types. SFRP2 may be important for eye retinal development and for myogenesis. This chain is Secreted frizzled-related protein 2 (SFRP2), found in Canis lupus familiaris (Dog).